The sequence spans 141 residues: Photosystem II protein PSBR, chloroplastic (141 aa).

The transit peptide at 1–27 directs the protein to the chloroplast; that stretch reads MATMQISAKGLAPLRPRVSSRRVVKPV. Phosphothreonine occurs at positions 34 and 37. Phosphoserine is present on S43. The chain crosses the membrane as a helical span at residues 114–134; that stretch reads GLIAWAGLVLVLLAVGVNLII.

The protein belongs to the psbR family.

The protein localises to the plastid. Its subcellular location is the chloroplast thylakoid membrane. Its function is as follows. Associated with the oxygen-evolving complex of photosystem II (PSII). Is required for the stable binding of LHCSR3 to PSII-LHCII supercomplexes and is essential for efficient energy-dependent quenching and the integrity of the PSII-LHCII-LHCSR3 supercomplex under continuous high light. The sequence is that of Photosystem II protein PSBR, chloroplastic from Chlamydomonas reinhardtii (Chlamydomonas smithii).